The sequence spans 607 residues: Dolichyl-diphosphooligosaccharide--protein glycosyltransferase subunit 1 (607 aa).

The first 24 residues, 1–24 (MEVPTARLLLLLLLGAWAPAPESA), serve as a signal peptide directing secretion. At 25–434 (SPEAPLLVNE…VVHYTFNKVL (410 aa)) the chain is on the lumenal side. The residue at position 187 (Lys-187) is an N6-acetyllysine. N-linked (GlcNAc...) asparagine glycosylation is present at Asn-299. The helical transmembrane segment at 435-455 (MLQEPLLVVAAFYILFFTVII) threads the bilayer. Topologically, residues 456 to 607 (YVRLDFSITK…TKIDHILDAL (152 aa)) are cytoplasmic. Lys-538 carries the post-translational modification N6-acetyllysine; alternate. A Glycyl lysine isopeptide (Lys-Gly) (interchain with G-Cter in SUMO2); alternate cross-link involves residue Lys-538.

This sequence belongs to the OST1 family. In terms of assembly, component of the oligosaccharyltransferase (OST) complex. OST exists in two different complex forms which contain common core subunits RPN1, RPN2, OST48, OST4, DAD1 and TMEM258, either STT3A or STT3B as catalytic subunits, and form-specific accessory subunits. STT3A complex assembly occurs through the formation of 3 subcomplexes. Subcomplex 1 contains RPN1 and TMEM258, subcomplex 2 contains the STT3A-specific subunits STT3A, DC2/OSTC, and KCP2 as well as the core subunit OST4, and subcomplex 3 contains RPN2, DAD1, and OST48. The STT3A complex can form stable complexes with the Sec61 complex or with both the Sec61 and TRAP complexes. Interacts with TMEM35A/NACHO. In terms of processing, ubiquitinated by the ECS(ASB11) complex. Post-translationally, ufmylated by UFL1 in response to endoplasmic reticulum stress, promoting reticulophagy of endoplasmic reticulum sheets.

It is found in the endoplasmic reticulum membrane. It functions in the pathway protein modification; protein glycosylation. Its function is as follows. Subunit of the oligosaccharyl transferase (OST) complex that catalyzes the initial transfer of a defined glycan (Glc(3)Man(9)GlcNAc(2) in eukaryotes) from the lipid carrier dolichol-pyrophosphate to an asparagine residue within an Asn-X-Ser/Thr consensus motif in nascent polypeptide chains, the first step in protein N-glycosylation. N-glycosylation occurs cotranslationally and the complex associates with the Sec61 complex at the channel-forming translocon complex that mediates protein translocation across the endoplasmic reticulum (ER). All subunits are required for a maximal enzyme activity. This Canis lupus familiaris (Dog) protein is Dolichyl-diphosphooligosaccharide--protein glycosyltransferase subunit 1.